We begin with the raw amino-acid sequence, 300 residues long: 3-dehydrocarnitine:acetyl-CoA trimethylamine transferase (300 aa).

Zn(2+)-binding residues include H51, H53, and E254.

This sequence belongs to the BKACE family. As to quaternary structure, homotetramer. It depends on Zn(2+) as a cofactor.

The catalysed reaction is 3-dehydrocarnitine + acetyl-CoA = N,N,N-trimethylglycyl-CoA + acetoacetate. The protein operates within amine and polyamine metabolism; carnitine metabolism. Its function is as follows. Catalyzes the condensation of dehydrocarnitine and acetyl-CoA, forming acetoacetate and betainyl-CoA (N,N,N-trimethylglycyl-CoA). Is involved in a L-carnitine degradation pathway that allows R.meliloti to grow on L-carnitine as the sole source of carbon and nitrogen. In Rhizobium meliloti (strain 1021) (Ensifer meliloti), this protein is 3-dehydrocarnitine:acetyl-CoA trimethylamine transferase.